A 492-amino-acid polypeptide reads, in one-letter code: Non-structural protein 1 (492 aa).

Residues 1-81 form an RNA-binding region; sequence MATFKDACFH…CFLDNEPHLL (81 aa). The zinc-binding domain stretch occupies residues 42–79; the sequence is CVECCQLTELTFCHGCSLAHVCQWCIQNKRCFLDNEPH. The interval 82 to 176 is important for cytoskeleton localization; it reads KLRTFESPIT…CVNLPYKLVN (95 aa). The interaction with host IRF3 stretch occupies residues 318-492; sequence TISQCKWCNV…LLISDSEDDD (175 aa). Positions 483 to 486 match the pLxIS motif motif; the sequence is LLIS.

This sequence belongs to the rotavirus NSP1 family. Interacts (via C-terminus) with host IRF3; this interaction leads to IRF3 degradation. Interacts with host IRF7; this interaction leads to IRF7 degradation. Interacts with host CUL1 and CUL3.

It localises to the host cytoplasm. Its subcellular location is the host cytoskeleton. Functionally, plays a role in the inhibition of host innate immunity by inducing the degradation of key host factors required to activate interferon production such as IRF3, IRF5 or IRF7. Associates with components of cullin RING ligases (CRLs) including CUL1 or CUL3, which are essential multisubunit ubiquitination complexes, to modulate their activities. The protein is Non-structural protein 1 of Oryctolagus cuniculus (Rabbit).